The sequence spans 521 residues: Bifunctional purine biosynthesis protein PurH (521 aa).

The region spanning 1 to 147 (MGEITRALIS…KNWEGVTVLV (147 aa)) is the MGS-like domain.

The protein belongs to the PurH family.

The catalysed reaction is (6R)-10-formyltetrahydrofolate + 5-amino-1-(5-phospho-beta-D-ribosyl)imidazole-4-carboxamide = 5-formamido-1-(5-phospho-D-ribosyl)imidazole-4-carboxamide + (6S)-5,6,7,8-tetrahydrofolate. The enzyme catalyses IMP + H2O = 5-formamido-1-(5-phospho-D-ribosyl)imidazole-4-carboxamide. It functions in the pathway purine metabolism; IMP biosynthesis via de novo pathway; 5-formamido-1-(5-phospho-D-ribosyl)imidazole-4-carboxamide from 5-amino-1-(5-phospho-D-ribosyl)imidazole-4-carboxamide (10-formyl THF route): step 1/1. Its pathway is purine metabolism; IMP biosynthesis via de novo pathway; IMP from 5-formamido-1-(5-phospho-D-ribosyl)imidazole-4-carboxamide: step 1/1. The polypeptide is Bifunctional purine biosynthesis protein PurH (Acidithiobacillus ferrooxidans (strain ATCC 53993 / BNL-5-31) (Leptospirillum ferrooxidans (ATCC 53993))).